Here is a 144-residue protein sequence, read N- to C-terminus: Large ribosomal subunit protein uL16 (144 aa).

A compositionally biased stretch (basic residues) spans 1-16 (MLVPKRVKHRKVQRGK). Residues 1-20 (MLVPKRVKHRKVQRGKMRGE) are disordered.

Belongs to the universal ribosomal protein uL16 family. In terms of assembly, part of the 50S ribosomal subunit.

Binds 23S rRNA and is also seen to make contacts with the A and possibly P site tRNAs. The chain is Large ribosomal subunit protein uL16 from Limosilactobacillus fermentum (strain NBRC 3956 / LMG 18251) (Lactobacillus fermentum).